Here is a 178-residue protein sequence, read N- to C-terminus: uncharacterized protein (178 aa).

Over residues 1–16 (MNKRTSVDASKEDLHP) the composition is skewed to basic and acidic residues. The interval 1 to 43 (MNKRTSVDASKEDLHPADPQSGEGVPPNRKNTKTSPRGEGTAP) is disordered.

This is an uncharacterized protein from Homo sapiens (Human).